The following is a 565-amino-acid chain: NAD-dependent malic enzyme (565 aa).

The active-site Proton donor is the Y104. An NAD(+)-binding site is contributed by R157. Residue K175 is the Proton acceptor of the active site. A divalent metal cation-binding residues include E246, D247, and D270. D270 and N418 together coordinate NAD(+).

Belongs to the malic enzymes family. As to quaternary structure, homotetramer. It depends on Mg(2+) as a cofactor. Mn(2+) is required as a cofactor.

It catalyses the reaction (S)-malate + NAD(+) = pyruvate + CO2 + NADH. The catalysed reaction is oxaloacetate + H(+) = pyruvate + CO2. In Salmonella newport (strain SL254), this protein is NAD-dependent malic enzyme.